Here is a 59-residue protein sequence, read N- to C-terminus: Small, acid-soluble spore protein C1 (59 aa).

Belongs to the alpha/beta-type SASP family. SASP are degraded in the first minutes of spore germination and provide amino acids for both new protein synthesis and metabolism.

Its function is as follows. SASP are bound to spore DNA. They are double-stranded DNA-binding proteins that cause DNA to change to an a-like conformation. They protect the DNA backbone from chemical and enzymatic cleavage and are thus involved in dormant spore's high resistance to UV light. The protein is Small, acid-soluble spore protein C1 (sspC1) of Clostridium perfringens (strain 13 / Type A).